The sequence spans 485 residues: ATP synthase subunit beta 1 (485 aa).

157–164 provides a ligand contact to ATP; it reads GGAGVGKT.

The protein belongs to the ATPase alpha/beta chains family. As to quaternary structure, F-type ATPases have 2 components, CF(1) - the catalytic core - and CF(0) - the membrane proton channel. CF(1) has five subunits: alpha(3), beta(3), gamma(1), delta(1), epsilon(1). CF(0) has three main subunits: a(1), b(2) and c(9-12). The alpha and beta chains form an alternating ring which encloses part of the gamma chain. CF(1) is attached to CF(0) by a central stalk formed by the gamma and epsilon chains, while a peripheral stalk is formed by the delta and b chains.

It localises to the cell inner membrane. It carries out the reaction ATP + H2O + 4 H(+)(in) = ADP + phosphate + 5 H(+)(out). In terms of biological role, produces ATP from ADP in the presence of a proton gradient across the membrane. The catalytic sites are hosted primarily by the beta subunits. The chain is ATP synthase subunit beta 1 from Psychromonas ingrahamii (strain DSM 17664 / CCUG 51855 / 37).